A 247-amino-acid polypeptide reads, in one-letter code: Aliphatic sulfonates import ATP-binding protein SsuB 3 (247 aa).

Residues 13–227 enclose the ABC transporter domain; it reads VRVRGAGRAF…SVVDPEFSAL (215 aa). An ATP-binding site is contributed by 45-52; the sequence is GASGSGKS.

Belongs to the ABC transporter superfamily. Aliphatic sulfonates importer (TC 3.A.1.17.2) family. In terms of assembly, the complex is composed of two ATP-binding proteins (SsuB), two transmembrane proteins (SsuC) and a solute-binding protein (SsuA).

Its subcellular location is the cell membrane. It catalyses the reaction ATP + H2O + aliphatic sulfonate-[sulfonate-binding protein]Side 1 = ADP + phosphate + aliphatic sulfonateSide 2 + [sulfonate-binding protein]Side 1.. Functionally, part of the ABC transporter complex SsuABC involved in aliphatic sulfonates import. Responsible for energy coupling to the transport system. The polypeptide is Aliphatic sulfonates import ATP-binding protein SsuB 3 (Nocardia farcinica (strain IFM 10152)).